The primary structure comprises 519 residues: Transketolase, chloroplastic (519 aa).

D11 is a Mg(2+) binding site. G12 and N41 together coordinate thiamine diphosphate. Positions 41 and 43 each coordinate Mg(2+). H118 is a thiamine diphosphate binding site. The substrate site is built by H118, R212, and S239. E266 and F293 together coordinate thiamine diphosphate. E266 (proton donor) is an active-site residue. 3 residues coordinate substrate: H317, D325, and R376.

The protein belongs to the transketolase family. Homodimer. Mg(2+) serves as cofactor. Ca(2+) is required as a cofactor. The cofactor is Mn(2+). Requires Co(2+) as cofactor. It depends on thiamine diphosphate as a cofactor. As to expression, constitutively expressed in leaves and roots.

The protein localises to the plastid. It localises to the chloroplast. The enzyme catalyses D-sedoheptulose 7-phosphate + D-glyceraldehyde 3-phosphate = aldehydo-D-ribose 5-phosphate + D-xylulose 5-phosphate. Catalyzes the transfer of a two-carbon ketol group from a ketose donor to an aldose acceptor, via a covalent intermediate with the cofactor thiamine pyrophosphate. This Craterostigma plantagineum (Blue gem) protein is Transketolase, chloroplastic (TKT3).